A 454-amino-acid chain; its full sequence is Chromosomal replication initiator protein DnaA (454 aa).

The domain I, interacts with DnaA modulators stretch occupies residues 1-83 (MTEKEHFFWN…IKVEYVFDEA (83 aa)). The interval 83 to 113 (ALVSETKPTLANNDFSNKREQQTPDLPTLNS) is domain II. Residues 114-332 (DLNSKYTFDN…GALKDISLVA (219 aa)) form a domain III, AAA+ region region. 4 residues coordinate ATP: G158, G160, K161, and T162. The tract at residues 333 to 454 (NVRQLDTITV…EIDTIKNKIK (122 aa)) is domain IV, binds dsDNA.

The protein belongs to the DnaA family. In terms of assembly, oligomerizes as a right-handed, spiral filament on DNA at oriC.

Its subcellular location is the cytoplasm. Its function is as follows. Plays an essential role in the initiation and regulation of chromosomal replication. ATP-DnaA binds to the origin of replication (oriC) to initiate formation of the DNA replication initiation complex once per cell cycle. Binds the DnaA box (a 9 base pair repeat at the origin) and separates the double-stranded (ds)DNA. Forms a right-handed helical filament on oriC DNA; dsDNA binds to the exterior of the filament while single-stranded (ss)DNA is stabiized in the filament's interior. The ATP-DnaA-oriC complex binds and stabilizes one strand of the AT-rich DNA unwinding element (DUE), permitting loading of DNA polymerase. After initiation quickly degrades to an ADP-DnaA complex that is not apt for DNA replication. Binds acidic phospholipids. This is Chromosomal replication initiator protein DnaA from Streptococcus thermophilus (strain ATCC BAA-250 / LMG 18311).